A 320-amino-acid chain; its full sequence is Cytochrome f (320 aa).

The signal sequence occupies residues 1–35 (MQIRNTFSSLKGEITRFISVSLMIYIITRASISNA). Heme is bound by residues Tyr36, Cys56, Cys59, and His60. A helical membrane pass occupies residues 286-306 (VQGLLFFLASVVLAQIFLVLK).

It belongs to the cytochrome f family. In terms of assembly, the 4 large subunits of the cytochrome b6-f complex are cytochrome b6, subunit IV (17 kDa polypeptide, petD), cytochrome f and the Rieske protein, while the 4 small subunits are PetG, PetL, PetM and PetN. The complex functions as a dimer. The cofactor is heme.

It is found in the plastid. The protein resides in the chloroplast thylakoid membrane. In terms of biological role, component of the cytochrome b6-f complex, which mediates electron transfer between photosystem II (PSII) and photosystem I (PSI), cyclic electron flow around PSI, and state transitions. This is Cytochrome f from Citrus sinensis (Sweet orange).